Consider the following 271-residue polypeptide: GPN-loop GTPase 3 (271 aa).

13-18 (GVGKST) is a binding site for GTP. The Gly-Pro-Asn (GPN)-loop; involved in dimer interface motif lies at 70–72 (GPN). 173–176 (SKMD) serves as a coordination point for GTP.

Belongs to the GPN-loop GTPase family. Heterodimers with GPN1 or GPN2. Binds to RNA polymerase II (RNAPII).

In terms of biological role, small GTPase required for proper nuclear import of RNA polymerase II and III (RNAPII and RNAPIII). May act at an RNAP assembly step prior to nuclear import. In Yarrowia lipolytica (strain CLIB 122 / E 150) (Yeast), this protein is GPN-loop GTPase 3.